The primary structure comprises 459 residues: Putrescine aminotransferase (459 aa).

Pyridoxal 5'-phosphate-binding positions include 150 to 151 (GT) and Q274. K300 carries the post-translational modification N6-(pyridoxal phosphate)lysine. T332 contacts pyridoxal 5'-phosphate.

It belongs to the class-III pyridoxal-phosphate-dependent aminotransferase family. Putrescine aminotransferase subfamily. Pyridoxal 5'-phosphate serves as cofactor.

The catalysed reaction is an alkane-alpha,omega-diamine + 2-oxoglutarate = an omega-aminoaldehyde + L-glutamate. It carries out the reaction putrescine + 2-oxoglutarate = 1-pyrroline + L-glutamate + H2O. The enzyme catalyses cadaverine + 2-oxoglutarate = 5-aminopentanal + L-glutamate. The protein operates within amine and polyamine degradation; putrescine degradation; 4-aminobutanal from putrescine (transaminase route): step 1/1. Functionally, catalyzes the aminotransferase reaction from putrescine to 2-oxoglutarate, leading to glutamate and 4-aminobutanal, which spontaneously cyclizes to form 1-pyrroline. This is the first step in one of two pathways for putrescine degradation, where putrescine is converted into 4-aminobutanoate (gamma-aminobutyrate or GABA) via 4-aminobutanal. Also functions as a cadaverine transaminase in a a L-lysine degradation pathway to succinate that proceeds via cadaverine, glutarate and L-2-hydroxyglutarate. The chain is Putrescine aminotransferase from Enterobacter sp. (strain 638).